A 1400-amino-acid polypeptide reads, in one-letter code: Macrophage-stimulating protein receptor (1400 aa).

Residues 1–24 (MELLPPLPQSFLLLLLLPAKPAAG) form the signal peptide. Residues 25–957 (EDWQCPRTPY…PGPDGVPQST (933 aa)) are Extracellular-facing. The Sema domain occupies 31–522 (RTPYAASRDF…SGDQVFQVPI (492 aa)). A glycan (N-linked (GlcNAc...) asparagine) is linked at Asn-66. 7 disulfides stabilise this stretch: Cys-101-Cys-104, Cys-107-Cys-162, Cys-135-Cys-143, Cys-174-Cys-177, Cys-300-Cys-367, Cys-385-Cys-407, and Cys-386-Cys-422. Asn-419, Asn-458, and Asn-488 each carry an N-linked (GlcNAc...) asparagine glycan. 4 disulfides stabilise this stretch: Cys-527–Cys-545, Cys-533–Cys-567, Cys-536–Cys-552, and Cys-548–Cys-558. 3 consecutive IPT/TIG domains span residues 569–671 (PKLT…FRVD), 684–767 (PVLI…FQYR), and 770–860 (PVVL…FRFL). Residues Asn-654, Asn-720, Asn-841, and Asn-897 are each glycosylated (N-linked (GlcNAc...) asparagine). The chain crosses the membrane as a helical span at residues 958–978 (LLGILLPLLLLVAALATALVF). At 979–1400 (SYWWRRKQLV…RPLSEPPRPT (422 aa)) the chain is on the cytoplasmic side. The region spanning 1082–1345 (THSDRVIGKG…VLVGEVEQIV (264 aa)) is the Protein kinase domain. Residues 1088 to 1096 (IGKGHFGVV), Lys-1114, and 1161 to 1164 (LPYM) each bind ATP. Catalysis depends on Asp-1208, which acts as the Proton acceptor. Residue Arg-1212 participates in ATP binding. A phosphotyrosine; by autocatalysis mark is found at Tyr-1238, Tyr-1239, Tyr-1353, and Tyr-1360. The disordered stretch occupies residues 1367–1400 (TSHEMNVRPEQPQFSPMPGNVRRPRPLSEPPRPT).

The protein belongs to the protein kinase superfamily. Tyr protein kinase family. As to quaternary structure, heterodimer of an alpha chain and a beta chain which are disulfide linked. Binds PLXNB1. Associates with and is negatively regulated by HYAL2. Interacts when phosphorylated with downstream effectors including PIK3R1, PCLG1, GRB2 and GAB1. Interacts with integrin beta1/ITGB1 in a ligand-independent fashion. In terms of processing, proteolytic processing yields the two subunits. Autophosphorylated in response to ligand binding on Tyr-1238 and Tyr-1239 in the kinase domain leading to further phosphorylation of Tyr-1353 and Tyr-1360 in the C-terminal multifunctional docking site. Post-translationally, ubiquitinated. Ubiquitination by CBL regulates the receptor stability and activity through proteasomal degradation. In terms of processing, O-mannosylation of IPT/TIG domains on Thr or Ser residues by TMEM260 is required for protein maturation. O-mannosylated residues are composed of single mannose glycans that are not elongated or modified. In terms of tissue distribution, expressed in colon, skin, lung and bone marrow.

The protein localises to the membrane. The enzyme catalyses L-tyrosyl-[protein] + ATP = O-phospho-L-tyrosyl-[protein] + ADP + H(+). With respect to regulation, in its inactive state, the C-terminal tail interacts with the catalytic domain and inhibits the kinase activity. Upon ligand binding, the C-terminal tail is displaced and becomes phosphorylated, thus increasing the kinase activity. In terms of biological role, receptor tyrosine kinase that transduces signals from the extracellular matrix into the cytoplasm by binding to MST1 ligand. Regulates many physiological processes including cell survival, migration and differentiation. Ligand binding at the cell surface induces autophosphorylation of RON on its intracellular domain that provides docking sites for downstream signaling molecules. Following activation by ligand, interacts with the PI3-kinase subunit PIK3R1, PLCG1 or the adapter GAB1. Recruitment of these downstream effectors by RON leads to the activation of several signaling cascades including the RAS-ERK, PI3 kinase-AKT, or PLCgamma-PKC. RON signaling activates the wound healing response by promoting epithelial cell migration, proliferation as well as survival at the wound site. Also plays a role in the innate immune response by regulating the migration and phagocytic activity of macrophages. Alternatively, RON can also promote signals such as cell migration and proliferation in response to growth factors other than MST1 ligand. This chain is Macrophage-stimulating protein receptor (MST1R), found in Homo sapiens (Human).